We begin with the raw amino-acid sequence, 213 residues long: 3-isopropylmalate dehydratase small subunit (213 aa).

The protein belongs to the LeuD family. LeuD type 1 subfamily. Heterodimer of LeuC and LeuD.

It carries out the reaction (2R,3S)-3-isopropylmalate = (2S)-2-isopropylmalate. It functions in the pathway amino-acid biosynthesis; L-leucine biosynthesis; L-leucine from 3-methyl-2-oxobutanoate: step 2/4. Its function is as follows. Catalyzes the isomerization between 2-isopropylmalate and 3-isopropylmalate, via the formation of 2-isopropylmaleate. The protein is 3-isopropylmalate dehydratase small subunit of Neisseria meningitidis serogroup C / serotype 2a (strain ATCC 700532 / DSM 15464 / FAM18).